A 642-amino-acid chain; its full sequence is Extracellular metalloproteinase 5 (642 aa).

The N-terminal stretch at 1-19 (MHGLLLAAGLLSLPLHVLA) is a signal peptide. The propeptide occupies 20–246 (HPQPSTTTSL…VHNVVDYVAH (227 aa)). An N-linked (GlcNAc...) asparagine glycan is attached at Asn-287. A Zn(2+)-binding site is contributed by His-430. Residue Glu-431 is part of the active site. His-434 is a binding site for Zn(2+). N-linked (GlcNAc...) asparagine glycosylation is found at Asn-595 and Asn-624.

It belongs to the peptidase M36 family. Zn(2+) serves as cofactor.

It is found in the secreted. In terms of biological role, secreted metalloproteinase that allows assimilation of proteinaceous substrates and probably acts as a virulence factor. This Arthroderma gypseum (strain ATCC MYA-4604 / CBS 118893) (Microsporum gypseum) protein is Extracellular metalloproteinase 5 (MEP5).